The sequence spans 176 residues: Alkyl hydroperoxide reductase AhpD (176 aa).

Residue cysteine 131 is the Proton donor of the active site. Cysteine 131 and cysteine 134 are disulfide-bonded. The active-site Cysteine sulfenic acid (-SOH) intermediate is cysteine 134.

This sequence belongs to the AhpD family.

It carries out the reaction N(6)-[(R)-dihydrolipoyl]-L-lysyl-[lipoyl-carrier protein] + a hydroperoxide = N(6)-[(R)-lipoyl]-L-lysyl-[lipoyl-carrier protein] + an alcohol + H2O. Antioxidant protein with alkyl hydroperoxidase activity. Required for the reduction of the AhpC active site cysteine residues and for the regeneration of the AhpC enzyme activity. The chain is Alkyl hydroperoxide reductase AhpD from Methylobacterium sp. (strain 4-46).